Reading from the N-terminus, the 412-residue chain is Imidazolonepropionase (412 aa).

Residues His-73 and His-75 each contribute to the Fe(3+) site. 2 residues coordinate Zn(2+): His-73 and His-75. 3 residues coordinate 4-imidazolone-5-propanoate: Arg-82, Tyr-145, and His-178. Tyr-145 serves as a coordination point for N-formimidoyl-L-glutamate. His-247 contributes to the Fe(3+) binding site. Position 247 (His-247) interacts with Zn(2+). Gln-250 is a 4-imidazolone-5-propanoate binding site. Residue Asp-322 participates in Fe(3+) binding. Zn(2+) is bound at residue Asp-322. Positions 324 and 326 each coordinate N-formimidoyl-L-glutamate. Ser-327 provides a ligand contact to 4-imidazolone-5-propanoate.

This sequence belongs to the metallo-dependent hydrolases superfamily. HutI family. Zn(2+) is required as a cofactor. It depends on Fe(3+) as a cofactor.

The protein resides in the cytoplasm. It carries out the reaction 4-imidazolone-5-propanoate + H2O = N-formimidoyl-L-glutamate. Its pathway is amino-acid degradation; L-histidine degradation into L-glutamate; N-formimidoyl-L-glutamate from L-histidine: step 3/3. In terms of biological role, catalyzes the hydrolytic cleavage of the carbon-nitrogen bond in imidazolone-5-propanoate to yield N-formimidoyl-L-glutamate. It is the third step in the universal histidine degradation pathway. This is Imidazolonepropionase from Shewanella amazonensis (strain ATCC BAA-1098 / SB2B).